Reading from the N-terminus, the 155-residue chain is Small ribosomal subunit protein uS15 (155 aa).

Residues 1–10 are compositionally biased toward basic residues; that stretch reads MARMHTRRRG. The tract at residues 1–66 is disordered; it reads MARMHTRRRG…EGVQGTPVPD (66 aa). A compositionally biased stretch (acidic residues) spans 21–33; sequence EPPEWSDVDEDAI. Over residues 34 to 45 the composition is skewed to basic and acidic residues; sequence EERVVELAEQGH.

This sequence belongs to the universal ribosomal protein uS15 family. In terms of assembly, part of the 30S ribosomal subunit.

In Halobacterium salinarum (strain ATCC 700922 / JCM 11081 / NRC-1) (Halobacterium halobium), this protein is Small ribosomal subunit protein uS15.